A 280-amino-acid polypeptide reads, in one-letter code: Inner membrane ABC transporter permease protein YcjP (280 aa).

At 1-10 the chain is on the cytoplasmic side; sequence MATNKRTLSR. A helical membrane pass occupies residues 11–31; that stretch reads IGFYCGLALFLIITLFPFFVM. Topologically, residues 32–53 are periplasmic; sequence LMTSFKGAKEAISLHPTLLPQQ. A helical transmembrane segment spans residues 54–74; the sequence is WTLEHYVDIFNPMIFPFVDYF. The region spanning 74 to 265 is the ABC transmembrane type-1 domain; it reads FRNSLVVSVV…LPVVIMYALS (192 aa). The Cytoplasmic segment spans residues 75-77; the sequence is RNS. Residues 78–98 form a helical membrane-spanning segment; sequence LVVSVVSSVVAVFLGILGAYA. The Periplasmic portion of the chain corresponds to 99 to 117; it reads LSRLRFKGRMTINASFYTV. The chain crosses the membrane as a helical span at residues 118-138; it reads YMFSGILLVVPLFKIITALGI. At 139-140 the chain is on the cytoplasmic side; the sequence is YD. The chain crosses the membrane as a helical span at residues 141–161; that stretch reads TEMALIITMVTQTLPTAVFML. At 162–189 the chain is on the periplasmic side; that stretch reads KSYFDTIPDEIEEAAMMDGLNRLQIIFR. A helical transmembrane segment spans residues 190 to 210; it reads ITVPLAMSGLISVFVYCFMVA. At 211 to 214 the chain is on the cytoplasmic side; that stretch reads WNDY. The chain crosses the membrane as a helical span at residues 215 to 235; the sequence is LFASIFLSSASNFTLPVGLNA. Topologically, residues 236–242 are periplasmic; that stretch reads LFSTPDY. A helical membrane pass occupies residues 243-263; that stretch reads IWGRMMAASLVTALPVVIMYA. Residues 264–280 are Cytoplasmic-facing; that stretch reads LSERFIKSGLTAGGVKG.

Belongs to the binding-protein-dependent transport system permease family. MalFG subfamily.

It localises to the cell inner membrane. Its function is as follows. Probably part of the binding-protein-dependent transport system YcjNOP. Probably responsible for the translocation of the substrate across the membrane. This is Inner membrane ABC transporter permease protein YcjP (ycjP) from Escherichia coli (strain K12).